We begin with the raw amino-acid sequence, 101 residues long: Urease subunit beta (101 aa).

It belongs to the urease beta subunit family. In terms of assembly, heterotrimer of UreA (gamma), UreB (beta) and UreC (alpha) subunits. Three heterotrimers associate to form the active enzyme.

Its subcellular location is the cytoplasm. The catalysed reaction is urea + 2 H2O + H(+) = hydrogencarbonate + 2 NH4(+). Its pathway is nitrogen metabolism; urea degradation; CO(2) and NH(3) from urea (urease route): step 1/1. The protein is Urease subunit beta of Rhizobium leguminosarum bv. trifolii (strain WSM2304).